The primary structure comprises 627 residues: Putative polyketide hydroxylase (627 aa).

Residues Pro22–Arg51 and Tyr309–Asp319 contribute to the FAD site. Residues Ala370–Gln469 form a disordered region. Residues Ala395–Gln469 are compositionally biased toward gly residues.

It belongs to the PheA/TfdB FAD monooxygenase family. Requires FAD as cofactor.

In terms of biological role, involved in developmentally regulated synthesis of a compound biosynthetically related to polyketide antibiotics which is essential for spore color in Streptococcus coelicolor. The sequence is that of Putative polyketide hydroxylase from Streptomyces coelicolor (strain ATCC BAA-471 / A3(2) / M145).